Here is a 254-residue protein sequence, read N- to C-terminus: 4-hydroxy-tetrahydrodipicolinate reductase (254 aa).

Residues 8 to 13, 87 to 89, and 111 to 114 contribute to the NAD(+) site; these read GASGKM, GTT, and ATNM. The active-site Proton donor/acceptor is His-143. His-144 serves as a coordination point for (S)-2,3,4,5-tetrahydrodipicolinate. Lys-147 acts as the Proton donor in catalysis. Residue 153 to 154 coordinates (S)-2,3,4,5-tetrahydrodipicolinate; the sequence is GT.

It belongs to the DapB family.

The protein localises to the cytoplasm. The enzyme catalyses (S)-2,3,4,5-tetrahydrodipicolinate + NAD(+) + H2O = (2S,4S)-4-hydroxy-2,3,4,5-tetrahydrodipicolinate + NADH + H(+). It carries out the reaction (S)-2,3,4,5-tetrahydrodipicolinate + NADP(+) + H2O = (2S,4S)-4-hydroxy-2,3,4,5-tetrahydrodipicolinate + NADPH + H(+). Its pathway is amino-acid biosynthesis; L-lysine biosynthesis via DAP pathway; (S)-tetrahydrodipicolinate from L-aspartate: step 4/4. Its function is as follows. Catalyzes the conversion of 4-hydroxy-tetrahydrodipicolinate (HTPA) to tetrahydrodipicolinate. This chain is 4-hydroxy-tetrahydrodipicolinate reductase, found in Campylobacter fetus subsp. fetus (strain 82-40).